A 314-amino-acid polypeptide reads, in one-letter code: Fumarylacetoacetate hydrolase domain-containing protein 2 (314 aa).

A divalent metal cation contacts are provided by Glu-159, Glu-161, and Asp-190. Lys-203 is subject to N6-acetyllysine; alternate. Lys-203 carries the post-translational modification N6-succinyllysine; alternate. The residue at position 234 (Lys-234) is an N6-acetyllysine.

This sequence belongs to the FAH family. It depends on Ca(2+) as a cofactor. Mg(2+) serves as cofactor.

May have hydrolase activity. The protein is Fumarylacetoacetate hydrolase domain-containing protein 2 (FAHD2) of Pongo abelii (Sumatran orangutan).